A 1134-amino-acid chain; its full sequence is Envelopment polyprotein (1134 aa).

Residues 1–18 form the signal peptide; it reads MGIWKWLVMASLVWPVLT. The Lumenal segment spans residues 19 to 487; the sequence is LRNVYDMKIE…GFHGWATAAL (469 aa). Disulfide bonds link Cys29–Cys151, Cys63–Cys157, Cys109–Cys128, Cys133–Cys138, Cys175–Cys185, Cys210–Cys247, Cys234–Cys351, and Cys380–Cys389. Asn134 is a glycosylation site (N-linked (GlcNAc...) asparagine; by host). Residues Asn235 and Asn347 are each glycosylated (N-linked (GlcNAc...) asparagine; by host). An N-linked (GlcNAc...) asparagine; by host glycan is attached at Asn399. Cystine bridges form between Cys405–Cys424 and Cys452–Cys475. Residues 488-508 traverse the membrane as a helical segment; sequence LVTFCFGWVLIPAVTFIILAI. Residues 509–627 lie on the Cytoplasmic side of the membrane; the sequence is LKFIANIFHT…LNLFRYKSRC (119 aa). The segment at 516–533 is binding to the ribonucleoprotein; the sequence is FHTSNQENRLKSVLRKIK. CCHC-type zinc fingers lie at residues 545–565 and 570–591; these read CDVC…GVSC and CPYC…YKVC. 3 binding to the ribonucleoprotein regions span residues 588–605, 592–603, and 611–625; these read YKVC…KKTV, QVTHRFRDDLKK, and TPGC…RYKS. The 24-residue stretch at 611-634 folds into the ITAM domain; it reads TPGCYRTLNLFRYKSRCYIFTMWI. The short motif at 615–618 is the YxxL element; the sequence is YRTL. The chain crosses the membrane as a helical span at residues 628 to 648; the sequence is YIFTMWIFLLVLESILWAASA. Topologically, residues 649–1104 are lumenal; that stretch reads SETPLTPVWN…EWISGIFSGN (456 aa). 7 disulfide bridges follow: Cys734-Cys769, Cys738-Cys776, Cys750-Cys884, Cys764-Cys895, Cys779-Cys903, Cys805-Cys814, and Cys822-Cys831. Residues 756–776 form a fusion loop region; sequence YQYETSWGCNPSDCPGCGTGC. Residue Asn927 is glycosylated (N-linked (GlcNAc...) asparagine; by host). 5 disulfides stabilise this stretch: Cys969–Cys999, Cys992–Cys1044, Cys1009–Cys1014, Cys1045–Cys1050, and Cys1084–Cys1088. A helical membrane pass occupies residues 1105-1125; it reads WIVLIVLCVFLLFSLVLLSIL. The binding to the ribonucleoprotein stretch occupies residues 1121-1134; sequence LLSILCPVRKHKKS. Topologically, residues 1126–1134 are cytoplasmic; it reads CPVRKHKKS.

It belongs to the hantavirus envelope glycoprotein family. Homodimer. Homotetramer; forms heterotetrameric Gn-Gc spikes in the pre-fusion conformation. Interacts (via C-terminus) with the nucleoprotein. Interacts with host TUFM; this interaction contributes to the virus-induced degradation of mitochondria by autophagy, which leads to degradation of host MAVS and inhibition of type I interferon (IFN) responses. Interacts with host MAP1LC3B; this interaction contributes to the virus-induced degradation of mitochondria by autophagy, which leads to degradation of host MAVS and inhibition of type I interferon (IFN) responses. As to quaternary structure, homodimer. Homotetramer; forms heterotetrameric Gn-Gc spikes in the pre-fusion conformation. Homotrimer; forms homotrimer in the post-fusion conformation at acidic pH. Interacts (via C-terminus) with the nucleoprotein. In terms of processing, envelope polyprotein precursor is quickly cleaved in vivo just after synthesis, presumably by host signal peptidase.

It is found in the virion membrane. Its subcellular location is the host cell surface. The protein localises to the host Golgi apparatus membrane. It localises to the host endoplasmic reticulum membrane. The protein resides in the host mitochondrion. Its function is as follows. Forms homotetramers with glycoprotein C at the surface of the virion. Attaches the virion to host cell receptors including integrin ITGAV/ITGB3. This attachment induces virion internalization predominantly through clathrin-dependent endocytosis. May also bind to host C1QBP for virus entry into the host cell. Mediates the assembly and budding of infectious virus particles through its interaction with the nucleocapsid protein and the viral genome. May dysregulate normal immune and endothelial cell responses through an ITAM motif. Translocates to mitochondria, binds to host TUFM and recruits MAP1LC3B. These interactions induce mitochondrial autophagy and therefore destruction of host MAVS leading to inhibition of type I interferon (IFN) responses. Concomitant breakdown of glycoprotein N is apparently prevented by the nucleoprotein that may inhibit Gn-stimulated autophagosome-lysosome fusion. Interacts with the viral genomic RNA. Functionally, forms homotetramers with glycoprotein N at the surface of the virion. Attaches the virion to host cell receptors including integrin ITGAV/ITGB3. This attachment induces virion internalization predominantly through clathrin-dependent endocytosis. May also bind to host C1QBP for virus entry into the host cell. Class II fusion protein that promotes fusion of viral membrane with host endosomal membrane after endocytosis of the virion. The chain is Envelopment polyprotein (GP) from Apodemus agrarius (Eurasian field mouse).